Reading from the N-terminus, the 417-residue chain is Senescence-associated protein AAF, chloroplastic (417 aa).

Residues methionine 1 to leucine 36 constitute a chloroplast transit peptide.

This sequence belongs to the ATA15/OSA15 family. Expressed in leaves. Expressed in 7-day-old seedlings, roots, rosette leaves, cauline leaves and flower buds.

The protein localises to the plastid. It localises to the chloroplast. Its function is as follows. Involved in modulation of redox homeostasis to regulate leaf senescence mediated by age and stress factors during plant development. Its function is dependent of EIN2, a central factor of ethylene signaling. This Arabidopsis thaliana (Mouse-ear cress) protein is Senescence-associated protein AAF, chloroplastic.